A 425-amino-acid chain; its full sequence is Serine--tRNA ligase (425 aa).

230–232 (TAE) is a binding site for L-serine. 261–263 (RSE) is a binding site for ATP. Glu-284 contributes to the L-serine binding site. 348-351 (EISS) serves as a coordination point for ATP. Ser-384 is a binding site for L-serine.

This sequence belongs to the class-II aminoacyl-tRNA synthetase family. Type-1 seryl-tRNA synthetase subfamily. In terms of assembly, homodimer. The tRNA molecule binds across the dimer.

The protein resides in the cytoplasm. The enzyme catalyses tRNA(Ser) + L-serine + ATP = L-seryl-tRNA(Ser) + AMP + diphosphate + H(+). It catalyses the reaction tRNA(Sec) + L-serine + ATP = L-seryl-tRNA(Sec) + AMP + diphosphate + H(+). The protein operates within aminoacyl-tRNA biosynthesis; selenocysteinyl-tRNA(Sec) biosynthesis; L-seryl-tRNA(Sec) from L-serine and tRNA(Sec): step 1/1. Functionally, catalyzes the attachment of serine to tRNA(Ser). Is also able to aminoacylate tRNA(Sec) with serine, to form the misacylated tRNA L-seryl-tRNA(Sec), which will be further converted into selenocysteinyl-tRNA(Sec). This Streptococcus pyogenes serotype M49 (strain NZ131) protein is Serine--tRNA ligase.